The following is a 185-amino-acid chain: Ribosome-recycling factor (185 aa).

This sequence belongs to the RRF family.

It is found in the cytoplasm. In terms of biological role, responsible for the release of ribosomes from messenger RNA at the termination of protein biosynthesis. May increase the efficiency of translation by recycling ribosomes from one round of translation to another. The chain is Ribosome-recycling factor from Bacillus anthracis (strain CDC 684 / NRRL 3495).